A 209-amino-acid chain; its full sequence is Large ribosomal subunit protein uL3 (209 aa).

An N5-methylglutamine modification is found at Gln150.

Belongs to the universal ribosomal protein uL3 family. In terms of assembly, part of the 50S ribosomal subunit. Forms a cluster with proteins L14 and L19. Post-translationally, methylated by PrmB.

One of the primary rRNA binding proteins, it binds directly near the 3'-end of the 23S rRNA, where it nucleates assembly of the 50S subunit. This Aliivibrio fischeri (strain MJ11) (Vibrio fischeri) protein is Large ribosomal subunit protein uL3.